The sequence spans 320 residues: Homoserine kinase (320 aa).

100–110 contributes to the ATP binding site; sequence PLSSGMGSSAA.

It belongs to the GHMP kinase family. Homoserine kinase subfamily.

The protein resides in the cytoplasm. The enzyme catalyses L-homoserine + ATP = O-phospho-L-homoserine + ADP + H(+). The protein operates within amino-acid biosynthesis; L-threonine biosynthesis; L-threonine from L-aspartate: step 4/5. Its function is as follows. Catalyzes the ATP-dependent phosphorylation of L-homoserine to L-homoserine phosphate. The chain is Homoserine kinase from Chlorobium phaeobacteroides (strain BS1).